Here is a 517-residue protein sequence, read N- to C-terminus: GMP synthase [glutamine-hydrolyzing] (517 aa).

The Glutamine amidotransferase type-1 domain occupies 11–202 (KIIVLDYGSQ…AFGVCGAQDN (192 aa)). Catalysis depends on Cys-88, which acts as the Nucleophile. Active-site residues include His-176 and Glu-178. The GMPS ATP-PPase domain occupies 203–392 (WTMNDFIDMQ…LGMPYELVWR (190 aa)). 230 to 236 (SGGVDSS) provides a ligand contact to ATP.

In terms of assembly, homodimer.

It catalyses the reaction XMP + L-glutamine + ATP + H2O = GMP + L-glutamate + AMP + diphosphate + 2 H(+). The protein operates within purine metabolism; GMP biosynthesis; GMP from XMP (L-Gln route): step 1/1. Its function is as follows. Catalyzes the synthesis of GMP from XMP. The protein is GMP synthase [glutamine-hydrolyzing] of Latilactobacillus sakei subsp. sakei (strain 23K) (Lactobacillus sakei subsp. sakei).